The sequence spans 427 residues: Ribosomal protein uS12 methylthiotransferase RimO (427 aa).

The MTTase N-terminal domain maps to 1 to 116; it reads MNFYVDVLGC…IAENIGKESI (116 aa). [4Fe-4S] cluster contacts are provided by Cys10, Cys46, Cys79, Cys145, Cys149, and Cys152. The Radical SAM core domain maps to 131 to 360; sequence VDEKQYAYVK…MEEQSKISFE (230 aa). The TRAM domain maps to 363–426; it reads EKMVGKTFKV…VYDLEGKIVE (64 aa).

The protein belongs to the methylthiotransferase family. RimO subfamily. [4Fe-4S] cluster is required as a cofactor.

The protein resides in the cytoplasm. It carries out the reaction L-aspartate(89)-[ribosomal protein uS12]-hydrogen + (sulfur carrier)-SH + AH2 + 2 S-adenosyl-L-methionine = 3-methylsulfanyl-L-aspartate(89)-[ribosomal protein uS12]-hydrogen + (sulfur carrier)-H + 5'-deoxyadenosine + L-methionine + A + S-adenosyl-L-homocysteine + 2 H(+). Functionally, catalyzes the methylthiolation of an aspartic acid residue of ribosomal protein uS12. The protein is Ribosomal protein uS12 methylthiotransferase RimO of Thermosipho africanus (strain TCF52B).